Here is a 182-residue protein sequence, read N- to C-terminus: ATP-dependent protease subunit HslV (182 aa).

T12 is a catalytic residue. Na(+) is bound by residues A167, C170, and T173.

Belongs to the peptidase T1B family. HslV subfamily. A double ring-shaped homohexamer of HslV is capped on each side by a ring-shaped HslU homohexamer. The assembly of the HslU/HslV complex is dependent on binding of ATP.

It localises to the cytoplasm. It catalyses the reaction ATP-dependent cleavage of peptide bonds with broad specificity.. Its activity is regulated as follows. Allosterically activated by HslU binding. In terms of biological role, protease subunit of a proteasome-like degradation complex believed to be a general protein degrading machinery. The sequence is that of ATP-dependent protease subunit HslV from Chlorobium chlorochromatii (strain CaD3).